The following is a 147-amino-acid chain: Peptide methionine sulfoxide reductase MsrB (147 aa).

The region spanning 8–131 is the MsrB domain; sequence KEELKKVLTE…NSASLKFIPK (124 aa). Residue Cys-120 is the Nucleophile of the active site.

This sequence belongs to the MsrB Met sulfoxide reductase family.

The catalysed reaction is L-methionyl-[protein] + [thioredoxin]-disulfide + H2O = L-methionyl-(R)-S-oxide-[protein] + [thioredoxin]-dithiol. In Clostridium perfringens (strain ATCC 13124 / DSM 756 / JCM 1290 / NCIMB 6125 / NCTC 8237 / Type A), this protein is Peptide methionine sulfoxide reductase MsrB.